The sequence spans 283 residues: Poly(3-hydroxyalkanoate) depolymerase (283 aa).

The region spanning 30-253 (PLLIFNGIGA…IDDGHLFLIT (224 aa)) is the AB hydrolase-1 domain. Serine 102 acts as the Charge relay system in catalysis.

The protein belongs to the AB hydrolase superfamily. Lipase family.

In terms of biological role, complements a mutant that does not degrade PHA; might be a lipase. This Ectopseudomonas oleovorans (Pseudomonas oleovorans) protein is Poly(3-hydroxyalkanoate) depolymerase.